The primary structure comprises 352 residues: Pejvakin (352 aa).

The protein belongs to the gasdermin family. As to quaternary structure, interacts with MAP1LC3B; interaction is direct. Interacts with IQGAP1. Interacts with ROCK2. Interacts with TRIOBP. As to expression, in ear, it is detected in the organ of Corti and the spiral ganglion within the cochlea in the sensory areas of the vestibule (cristae ampullares of the semicircular ducts, and maculae of the saccule and utricle) and in the first 3 relays (cochlear nuclei, superior olivary complex and inferior colliculus) of the afferent auditory pathway. Detected in hair cells of the cochlea and vestibule but not in neurons. In the afferent auditory pathway, it is present in the cell bodies of neurons but not in fiber bundles such as the trapezoid body in the brainstem. Also detected in spiral ganglion cells, which form the auditory nerve and project to the cochlear nuclei in the brainstem. Also present in the cochlear nuclei, the superior olive and the inferior colliculus (at protein level). Expressed in all the adult organs tested: brain, eye, inner ear, heart, lung, kidney, liver, intestine, testis and weakly in skeletal muscle.

The protein localises to the peroxisome membrane. Its subcellular location is the cell projection. It is found in the cilium. In terms of biological role, peroxisome-associated protein required to protect auditory hair cells against noise-induced damage. Acts by regulating noise-induced peroxisome proliferation in auditory hair cells and neurons, and promoting autophagic degradation of damaged peroxisomes (pexophagy). Noise overexposure increases reactive oxygen species (ROS) levels, causing oxidative damage to auditory hair cells and resulting in hearing loss. PJVK acts as a ROS sensor that recruits the autophagy machinery to trigger pexophagy of peroxisomes damaged by oxidative stress. In addition to pexophagy, also required to promote peroxisome proliferation in response to sound overstimulation. The chain is Pejvakin from Mus musculus (Mouse).